An 89-amino-acid chain; its full sequence is Small ribosomal subunit protein uS14A (89 aa).

Belongs to the universal ribosomal protein uS14 family. As to quaternary structure, part of the 30S ribosomal subunit. Contacts proteins S3 and S10.

Binds 16S rRNA, required for the assembly of 30S particles and may also be responsible for determining the conformation of the 16S rRNA at the A site. The sequence is that of Small ribosomal subunit protein uS14A from Bacillus pumilus (strain SAFR-032).